We begin with the raw amino-acid sequence, 254 residues long: Type III pantothenate kinase (254 aa).

7–14 (DVGNTRLK) contacts ATP. Residues Tyr-96 and 103–106 (GSDR) each bind substrate. Asp-105 (proton acceptor) is an active-site residue. Residue Thr-133 participates in ATP binding. Residue Thr-183 coordinates substrate.

The protein belongs to the type III pantothenate kinase family. In terms of assembly, homodimer. NH4(+) is required as a cofactor. K(+) serves as cofactor.

It localises to the cytoplasm. It catalyses the reaction (R)-pantothenate + ATP = (R)-4'-phosphopantothenate + ADP + H(+). Its pathway is cofactor biosynthesis; coenzyme A biosynthesis; CoA from (R)-pantothenate: step 1/5. In terms of biological role, catalyzes the phosphorylation of pantothenate (Pan), the first step in CoA biosynthesis. This chain is Type III pantothenate kinase, found in Paracidovorax citrulli (strain AAC00-1) (Acidovorax citrulli).